The primary structure comprises 284 residues: Pantothenate synthetase (284 aa).

30 to 37 (MGNLHEGH) contributes to the ATP binding site. The active-site Proton donor is H37. Q61 is a binding site for (R)-pantoate. Q61 contributes to the beta-alanine binding site. 149 to 152 (GEKD) is a binding site for ATP. Q155 serves as a coordination point for (R)-pantoate. Residues V178 and 186–189 (LSSR) contribute to the ATP site.

The protein belongs to the pantothenate synthetase family. Homodimer.

The protein localises to the cytoplasm. It carries out the reaction (R)-pantoate + beta-alanine + ATP = (R)-pantothenate + AMP + diphosphate + H(+). Its pathway is cofactor biosynthesis; (R)-pantothenate biosynthesis; (R)-pantothenate from (R)-pantoate and beta-alanine: step 1/1. In terms of biological role, catalyzes the condensation of pantoate with beta-alanine in an ATP-dependent reaction via a pantoyl-adenylate intermediate. This chain is Pantothenate synthetase, found in Yersinia enterocolitica serotype O:8 / biotype 1B (strain NCTC 13174 / 8081).